Consider the following 316-residue polypeptide: Protoheme IX farnesyltransferase 2 (316 aa).

Residues 1 to 15 are compositionally biased toward polar residues; it reads MEQNLNSEQKPQSSA. The segment at 1–24 is disordered; the sequence is MEQNLNSEQKPQSSAKPRGKSSRS. 7 helical membrane passes run 62 to 82, 117 to 137, 163 to 183, 188 to 208, 231 to 251, 252 to 272, and 293 to 313; these read IPEMIFSTVGSALVIGAAGAF, IVMLIIGLAVLALASPLAAAF, IGSISGAVPPLIGWSAVSTDI, IARFIFVMVIWQMPHFYAIAI, TYYQTNFYLILLILSSFLFGS, LSVGIMLVALLLSIAWLVMSI, and LFHMTILFTTVIVYSLVGVIF.

This sequence belongs to the UbiA prenyltransferase family. Protoheme IX farnesyltransferase subfamily. Interacts with CtaA.

The protein localises to the cell membrane. It carries out the reaction heme b + (2E,6E)-farnesyl diphosphate + H2O = Fe(II)-heme o + diphosphate. Its pathway is porphyrin-containing compound metabolism; heme O biosynthesis; heme O from protoheme: step 1/1. Its function is as follows. Converts heme B (protoheme IX) to heme O by substitution of the vinyl group on carbon 2 of heme B porphyrin ring with a hydroxyethyl farnesyl side group. This Lysinibacillus sphaericus (strain C3-41) protein is Protoheme IX farnesyltransferase 2.